A 68-amino-acid chain; its full sequence is Large ribosomal subunit protein uL29 (68 aa).

Belongs to the universal ribosomal protein uL29 family.

The protein is Large ribosomal subunit protein uL29 of Rhodopseudomonas palustris (strain BisB18).